Consider the following 585-residue polypeptide: MSQAEAITDTGEIESVSGPVVTATGLDAQMNDVVYVGDEGLMGEVIEIEGDVTTIQVYEETSGIGPGQPVDNTGEPLTVDLGPGMLDSIYDGVQRPLDVLEDEMGAFLDRGVDAPGIDLDTDWEFEPTVEAGDEVAAGDVVGTVDETVSIEHKVLVPPRSDGGEVVAVESGTFTVDDTVVELDTGEEIQMHQEWPVRRQRPTVDKQTPTEPLVSGQRILDGLFPIAKGGTAAIPGPFGSGKTVTQQSLAKFADADIVVYIGCGERGNEMTEVIEDFPELPDPQTGNPLMARTTLIANTSNMPVAARESCIYTGITIAEYYRDMGYDVALMADSTSRWAEAMREISSRLEEMPGEEGYPAYLAARLSEFYERAGYFENFNGTEGSISVIGAVSPPGGDFSEPVTQNTLRIVKTFWALDSDLAERRHFPAINWDESYSLYKDQLDPWFTDNVVDDWAEQRQWAVDILDEESELEEIVQLVGKDALPEDQQLTLEVARYIREAWLQQNALHDVDRYCPPEKTYAILSGIKTLHEESFEALDAGVPVEEITSIDAAPRLNRLGTTPDDEHEAEVAEIKQQITEQLRELY.

235 to 242 (GPFGSGKT) lines the ATP pocket.

Belongs to the ATPase alpha/beta chains family. In terms of assembly, has multiple subunits with at least A(3), B(3), C, D, E, F, H, I and proteolipid K(x).

Its subcellular location is the cell membrane. It carries out the reaction ATP + H2O + 4 H(+)(in) = ADP + phosphate + 5 H(+)(out). Its function is as follows. Component of the A-type ATP synthase that produces ATP from ADP in the presence of a proton gradient across the membrane. The A chain is the catalytic subunit. In Halobacterium salinarum (strain ATCC 29341 / DSM 671 / R1), this protein is A-type ATP synthase subunit A.